Here is a 350-residue protein sequence, read N- to C-terminus: Putative ATP-binding protein BRA0745/BS1330_II0738 (350 aa).

In terms of domain architecture, ABC transporter spans 4–234 (VSLRGISKTF…PANKFVAGFI (231 aa)). Position 36 to 43 (36 to 43 (GPSGCGKS)) interacts with ATP.

The protein belongs to the ABC transporter superfamily. The complex is composed of two ATP-binding proteins (BRA0745), two transmembrane proteins (BRA0749) and a solute-binding protein (BRA0748).

Its subcellular location is the cell inner membrane. In terms of biological role, probably part of an ABC transporter complex. Probably responsible for energy coupling to the transport system. The protein is Putative ATP-binding protein BRA0745/BS1330_II0738 of Brucella suis biovar 1 (strain 1330).